Here is a 77-residue protein sequence, read N- to C-terminus: MPPRPLDVLNRSLKSPVIVRLKGGREFRGTLDGYDIHMNLVLLDAEEIQNGEVVRKVGSVVIRGDTVVFVSPAPGGE.

One can recognise a Sm domain in the interval 4 to 76; sequence RPLDVLNRSL…VVFVSPAPGG (73 aa).

It belongs to the snRNP Sm proteins family.

The protein is Putative snRNP Sm-like protein of Archaeoglobus fulgidus (strain ATCC 49558 / DSM 4304 / JCM 9628 / NBRC 100126 / VC-16).